We begin with the raw amino-acid sequence, 143 residues long: Transcriptional regulator MraZ (143 aa).

2 consecutive SpoVT-AbrB domains span residues threonine 5–glutamate 47 and alanine 76–alanine 119.

It belongs to the MraZ family. In terms of assembly, forms oligomers.

It is found in the cytoplasm. Its subcellular location is the nucleoid. This Corynebacterium efficiens (strain DSM 44549 / YS-314 / AJ 12310 / JCM 11189 / NBRC 100395) protein is Transcriptional regulator MraZ.